We begin with the raw amino-acid sequence, 200 residues long: Holliday junction resolvase RecU (200 aa).

Positions 82, 84, 97, and 116 each coordinate Mg(2+).

The protein belongs to the RecU family. The cofactor is Mg(2+).

It localises to the cytoplasm. The enzyme catalyses Endonucleolytic cleavage at a junction such as a reciprocal single-stranded crossover between two homologous DNA duplexes (Holliday junction).. Endonuclease that resolves Holliday junction intermediates in genetic recombination. Cleaves mobile four-strand junctions by introducing symmetrical nicks in paired strands. Promotes annealing of linear ssDNA with homologous dsDNA. Required for DNA repair, homologous recombination and chromosome segregation. This Streptococcus sanguinis (strain SK36) protein is Holliday junction resolvase RecU.